The chain runs to 120 residues: Chaperonin GroEL (120 aa).

23-27 (DGTTT) is an ATP binding site.

The protein belongs to the chaperonin (HSP60) family. In terms of assembly, forms a cylinder of 14 subunits composed of two heptameric rings stacked back-to-back. Interacts with the co-chaperonin GroES.

It localises to the cytoplasm. The catalysed reaction is ATP + H2O + a folded polypeptide = ADP + phosphate + an unfolded polypeptide.. Functionally, together with its co-chaperonin GroES, plays an essential role in assisting protein folding. The GroEL-GroES system forms a nano-cage that allows encapsulation of the non-native substrate proteins and provides a physical environment optimized to promote and accelerate protein folding. This is Chaperonin GroEL from Mycolicibacterium fallax (Mycobacterium fallax).